Consider the following 483-residue polypeptide: Altronate oxidoreductase (483 aa).

Residue 18 to 29 (IIQFGEGNFLRA) coordinates NAD(+).

The protein belongs to the mannitol dehydrogenase family. UxaB subfamily.

The catalysed reaction is D-altronate + NAD(+) = keto-D-tagaturonate + NADH + H(+). The protein operates within carbohydrate metabolism; pentose and glucuronate interconversion. In Klebsiella pneumoniae (strain 342), this protein is Altronate oxidoreductase.